The chain runs to 750 residues: Photosystem I P700 chlorophyll a apoprotein A1 (750 aa).

A run of 8 helical transmembrane segments spans residues 70–93 (VFSA…FHGA), 156–179 (LYCT…FHYH), 195–219 (LNHH…HVSL), 291–309 (IVHH…GHMY), 346–369 (WHAQ…HHMY), 385–411 (LSLF…IFMV), 433–455 (AIIS…LYIH), and 531–549 (FLVH…LILL). [4Fe-4S] cluster-binding residues include cysteine 573 and cysteine 582. The next 2 membrane-spanning stretches (helical) occupy residues 589–610 (HVFL…HFSW) and 664–686 (LSAY…MFLF). Histidine 675 contributes to the chlorophyll a' binding site. The chlorophyll a site is built by methionine 683 and tyrosine 691. A phylloquinone-binding site is contributed by tryptophan 692. A helical membrane pass occupies residues 724-744 (AVGVTHYLLGGIATTWAFFLA).

The protein belongs to the PsaA/PsaB family. In terms of assembly, the PsaA/B heterodimer binds the P700 chlorophyll special pair and subsequent electron acceptors. PSI consists of a core antenna complex that captures photons, and an electron transfer chain that converts photonic excitation into a charge separation. The eukaryotic PSI reaction center is composed of at least 11 subunits. The cofactor is P700 is a chlorophyll a/chlorophyll a' dimer, A0 is one or more chlorophyll a, A1 is one or both phylloquinones and FX is a shared 4Fe-4S iron-sulfur center..

The protein resides in the plastid. It localises to the chloroplast thylakoid membrane. It carries out the reaction reduced [plastocyanin] + hnu + oxidized [2Fe-2S]-[ferredoxin] = oxidized [plastocyanin] + reduced [2Fe-2S]-[ferredoxin]. Its function is as follows. PsaA and PsaB bind P700, the primary electron donor of photosystem I (PSI), as well as the electron acceptors A0, A1 and FX. PSI is a plastocyanin-ferredoxin oxidoreductase, converting photonic excitation into a charge separation, which transfers an electron from the donor P700 chlorophyll pair to the spectroscopically characterized acceptors A0, A1, FX, FA and FB in turn. Oxidized P700 is reduced on the lumenal side of the thylakoid membrane by plastocyanin. The chain is Photosystem I P700 chlorophyll a apoprotein A1 from Piper cenocladum (Ant piper).